The sequence spans 398 residues: Alpha-(1,3)-fucosyltransferase 4 (398 aa).

Residues 1–15 (MRARWGRRGARRGGP) lie on the Cytoplasmic side of the membrane. A helical; Signal-anchor for type II membrane protein transmembrane segment spans residues 16–40 (GLPGTHLALLAASLLSSSVAIYVCW). Topologically, residues 41–398 (KQLPPLPWAS…VPNLAGWFQQ (358 aa)) are lumenal. 3 N-linked (GlcNAc...) asparagine glycosylation sites follow: Asn84, Asn183, and Asn311.

Belongs to the glycosyltransferase 10 family.

The protein localises to the golgi apparatus. It is found in the golgi stack membrane. The catalysed reaction is a beta-D-galactosyl-(1-&gt;4)-N-acetyl-beta-D-glucosaminyl derivative + GDP-beta-L-fucose = a beta-D-galactosyl-(1-&gt;4)-[alpha-L-fucosyl-(1-&gt;3)]-N-acetyl-beta-D-glucosaminyl derivative + GDP + H(+). The enzyme catalyses an N-acetyl-alpha-neuraminyl-(2-&gt;3)-beta-D-galactosyl-(1-&gt;4)-N-acetyl-beta-D-glucosaminyl derivative + GDP-beta-L-fucose = an alpha-Neu5Ac-(2-&gt;3)-beta-D-Gal-(1-&gt;4)-[alpha-L-Fuc-(1-&gt;3)]-beta-D-GlcNAc derivative + GDP + H(+). It catalyses the reaction an alpha-Neu5Ac-(2-&gt;3)-beta-D-Gal-(1-&gt;4)-beta-D-GlcNAc-(1-&gt;3)-beta-D-Gal-(1-&gt;4)-beta-D-GlcNAc derivative + GDP-beta-L-fucose = an alpha-Neu5Ac-(2-&gt;3)-beta-D-Gal-(1-&gt;4)-beta-D-GlcNAc-(1-&gt;3)-beta-D-Gal-(1-&gt;4)-[alpha-L-Fuc-(1-&gt;3)]-beta-D-GlcNAc derivative + GDP + H(+). It carries out the reaction an alpha-Neu5Ac-(2-&gt;3)-beta-D-Gal-(1-&gt;4)-beta-D-GlcNAc6S derivative + GDP-beta-L-fucose = an alpha-Neu5Ac-(2-&gt;3)-beta-D-Gal-(1-&gt;4)-[alpha-L-Fuc-(1-&gt;3)]-beta-D-GlcNAc6S derivative + GDP + H(+). It functions in the pathway protein modification; protein glycosylation. Its function is as follows. Catalyzes alpha(1-&gt;3) linkage of fucosyl moiety transferred from GDP-beta-L-fucose to N-acetyl glucosamine (GlcNAc) within type 2 lactosamine (LacNAc, Gal-beta(1-&gt;4)GlcNAc) glycan attached to N- or O-linked glycoproteins. Robustly fucosylates nonsialylated distal LacNAc unit of the polylactosamine chain to form Lewis X antigen (CD15), a glycan determinant known to mediate important cellular functions in development and immunity. Fucosylates with lower efficiency sialylated LacNAc acceptors to form sialyl Lewis X and 6-sulfo sialyl Lewis X determinants that serve as recognition epitopes for C-type lectins. Together with FUT7 contributes to SELE, SELL and SELP selectin ligand biosynthesis and selectin-dependent lymphocyte homing, leukocyte migration and blood leukocyte homeostasis. In a cell type specific manner, may also fucosylate the internal LacNAc unit of the polylactosamine chain to form VIM-2 antigen that serves as recognition epitope for SELE. In Bos taurus (Bovine), this protein is Alpha-(1,3)-fucosyltransferase 4 (FUT4).